The primary structure comprises 220 residues: Phosphoribosylformylglycinamidine synthase subunit PurQ (220 aa).

One can recognise a Glutamine amidotransferase type-1 domain in the interval Arg-2 to Val-220. The active-site Nucleophile is the Cys-85. Residues His-193 and Glu-195 contribute to the active site.

In terms of assembly, part of the FGAM synthase complex composed of 1 PurL, 1 PurQ and 2 PurS subunits.

The protein resides in the cytoplasm. The enzyme catalyses N(2)-formyl-N(1)-(5-phospho-beta-D-ribosyl)glycinamide + L-glutamine + ATP + H2O = 2-formamido-N(1)-(5-O-phospho-beta-D-ribosyl)acetamidine + L-glutamate + ADP + phosphate + H(+). The catalysed reaction is L-glutamine + H2O = L-glutamate + NH4(+). It functions in the pathway purine metabolism; IMP biosynthesis via de novo pathway; 5-amino-1-(5-phospho-D-ribosyl)imidazole from N(2)-formyl-N(1)-(5-phospho-D-ribosyl)glycinamide: step 1/2. Functionally, part of the phosphoribosylformylglycinamidine synthase complex involved in the purines biosynthetic pathway. Catalyzes the ATP-dependent conversion of formylglycinamide ribonucleotide (FGAR) and glutamine to yield formylglycinamidine ribonucleotide (FGAM) and glutamate. The FGAM synthase complex is composed of three subunits. PurQ produces an ammonia molecule by converting glutamine to glutamate. PurL transfers the ammonia molecule to FGAR to form FGAM in an ATP-dependent manner. PurS interacts with PurQ and PurL and is thought to assist in the transfer of the ammonia molecule from PurQ to PurL. This chain is Phosphoribosylformylglycinamidine synthase subunit PurQ, found in Rubrobacter xylanophilus (strain DSM 9941 / JCM 11954 / NBRC 16129 / PRD-1).